The following is a 101-amino-acid chain: Putative pterin-4-alpha-carbinolamine dehydratase (101 aa).

This sequence belongs to the pterin-4-alpha-carbinolamine dehydratase family.

It catalyses the reaction (4aS,6R)-4a-hydroxy-L-erythro-5,6,7,8-tetrahydrobiopterin = (6R)-L-erythro-6,7-dihydrobiopterin + H2O. The chain is Putative pterin-4-alpha-carbinolamine dehydratase from Streptomyces coelicolor (strain ATCC BAA-471 / A3(2) / M145).